We begin with the raw amino-acid sequence, 206 residues long: Large ribosomal subunit protein uL4 (206 aa).

Residues 43–78 are disordered; it reads NQRQGTHDTKTRAEVRGGGRKPWRQKGTGRARAGSS. A compositionally biased stretch (basic and acidic residues) spans 47-59; the sequence is GTHDTKTRAEVRG. Basic residues predominate over residues 60–71; it reads GGRKPWRQKGTG.

This sequence belongs to the universal ribosomal protein uL4 family. As to quaternary structure, part of the 50S ribosomal subunit.

One of the primary rRNA binding proteins, this protein initially binds near the 5'-end of the 23S rRNA. It is important during the early stages of 50S assembly. It makes multiple contacts with different domains of the 23S rRNA in the assembled 50S subunit and ribosome. In terms of biological role, forms part of the polypeptide exit tunnel. The sequence is that of Large ribosomal subunit protein uL4 from Desulforamulus reducens (strain ATCC BAA-1160 / DSM 100696 / MI-1) (Desulfotomaculum reducens).